Here is a 303-residue protein sequence, read N- to C-terminus: Eukaryotic translation initiation factor 3 subunit G (303 aa).

The tract at residues Met-1–Asp-38 is disordered. One can recognise an RRM domain in the interval Ala-223–Lys-301.

The protein belongs to the eIF-3 subunit G family. In terms of assembly, component of the eukaryotic translation initiation factor 3 (eIF-3) complex.

Its subcellular location is the cytoplasm. In terms of biological role, RNA-binding component of the eukaryotic translation initiation factor 3 (eIF-3) complex, which is involved in protein synthesis of a specialized repertoire of mRNAs and, together with other initiation factors, stimulates binding of mRNA and methionyl-tRNAi to the 40S ribosome. The eIF-3 complex specifically targets and initiates translation of a subset of mRNAs involved in cell proliferation. This subunit can bind 18S rRNA. In Chaetomium globosum (strain ATCC 6205 / CBS 148.51 / DSM 1962 / NBRC 6347 / NRRL 1970) (Soil fungus), this protein is Eukaryotic translation initiation factor 3 subunit G.